The following is an 875-amino-acid chain: Importin subunit beta-1 (875 aa).

N-acetylmethionine is present on Met1. HEAT repeat units lie at residues 2–31 (ELIT…AAVE), 33–64 (LPTF…IRLL), 84–122 (ANAR…EIPV), 128–159 (LIPQ…ICQD), and 169–201 (SNEI…LNSL). A Phosphoserine modification is found at Ser12. In terms of domain architecture, Importin N-terminal spans 21–100 (AQKFLERAAV…KNYVLQTLGT (80 aa)). Lys210 bears the N6-acetyllysine mark. 14 HEAT repeats span residues 211–246 (ESER…IMSL), 252–301 (ETYM…EAAE), 313–359 (YAKG…TCCE), 363–393 (VPHV…GSIL), 401–437 (LKPL…ICEL), 448–484 (LAPL…YEAA), 499–536 (SSSF…EIVK), 543–591 (YPAV…QNVL), 599–638 (ALQI…VEVL), 643–680 (LKYM…CRAL), 685–723 (LPFC…TLAI), 731–775 (LEVV…VQGL), 785–828 (DVML…CTAF), and 830–872 (KDVL…RKLK). The tract at residues 285 to 461 (VCDEEMDLAI…LQCLIEGLSA (177 aa)) is essential for high affinity interaction with RPL23A. Residues 328–341 (TLTKQDENDDDDDW) form an IAB-binding region. Positions 333 to 418 (DENDDDDDWN…MPTLIELMKD (86 aa)) are ran-GTP binding. N6-acetyllysine is present on residues Lys834 and Lys866.

The protein belongs to the importin beta family. Importin beta-1 subfamily. In terms of assembly, forms a complex with an importin alpha subunit. Interacts with XPO1. Forms a heterodimer with IPO7. The KPNB1/IPO7 heterodimer interacts with H1 histone. Interacts with SNUPN. Interacts with H2A, H2B, H3 and H4 histones. Component of an import snRNP complex composed of KPNB1, SNUPN, SMN1 and ZNF259. Component of a nuclear export receptor complex composed of KPNB1, Ran, SNUPN and XPO1. Interacts with SRY. Interacts with PRKCI/atypical protein kinase C iota. Interacts with KPNA2. Interacts with KPNA7. Interacts with SNAI1 (via zinc fingers) and SNAI2 (via zinc fingers). Interacts with SLC35G1 and STIM1. Interacts with DCAF8. Interacts with RAN. Interacts with NUMA1 (via C-terminus); this interaction is inhibited by RanGTP. Interacts with ZBED1/hDREF; required for nuclear import of ZBED1/hDREF. Interacts with SRP19. Interacts with RPL23A (via BIB domain), RPS7 and RPL5. In terms of processing, mono-ADP-ribosylated by PARP16.

It is found in the cytoplasm. The protein resides in the nucleus envelope. Its function is as follows. Functions in nuclear protein import, either in association with an adapter protein, like an importin-alpha subunit, which binds to nuclear localization signals (NLS) in cargo substrates, or by acting as autonomous nuclear transport receptor. Acting autonomously, serves itself as NLS receptor. Docking of the importin/substrate complex to the nuclear pore complex (NPC) is mediated by KPNB1 through binding to nucleoporin FxFG repeats and the complex is subsequently translocated through the pore by an energy requiring, Ran-dependent mechanism. At the nucleoplasmic side of the NPC, Ran binds to importin-beta and the three components separate and importin-alpha and -beta are re-exported from the nucleus to the cytoplasm where GTP hydrolysis releases Ran from importin. The directionality of nuclear import is thought to be conferred by an asymmetric distribution of the GTP- and GDP-bound forms of Ran between the cytoplasm and nucleus. Mediates autonomously the nuclear import of ribosomal proteins RPL23A, RPS7 and RPL5. In association with IPO7, mediates the nuclear import of H1 histone. In vitro, mediates nuclear import of H2A, H2B, H3 and H4 histones. Imports MRTFA, SNAI1 and PRKCI into the nucleus. The protein is Importin subunit beta-1 (Kpnb1) of Rattus norvegicus (Rat).